Reading from the N-terminus, the 138-residue chain is Large ribosomal subunit protein uL16 (138 aa).

A compositionally biased stretch (basic residues) spans 1–13; the sequence is MLQPKRRKYRKEQ. Residues 1 to 24 form a disordered region; the sequence is MLQPKRRKYRKEQKGRNTGKATRG.

This sequence belongs to the universal ribosomal protein uL16 family. In terms of assembly, part of the 50S ribosomal subunit.

Functionally, binds 23S rRNA and is also seen to make contacts with the A and possibly P site tRNAs. The chain is Large ribosomal subunit protein uL16 from Burkholderia lata (strain ATCC 17760 / DSM 23089 / LMG 22485 / NCIMB 9086 / R18194 / 383).